The chain runs to 949 residues: Glycine dehydrogenase (decarboxylating) (949 aa).

The residue at position 704 (K704) is an N6-(pyridoxal phosphate)lysine.

Belongs to the GcvP family. In terms of assembly, the glycine cleavage system is composed of four proteins: P, T, L and H. Pyridoxal 5'-phosphate serves as cofactor.

It carries out the reaction N(6)-[(R)-lipoyl]-L-lysyl-[glycine-cleavage complex H protein] + glycine + H(+) = N(6)-[(R)-S(8)-aminomethyldihydrolipoyl]-L-lysyl-[glycine-cleavage complex H protein] + CO2. In terms of biological role, the glycine cleavage system catalyzes the degradation of glycine. The P protein binds the alpha-amino group of glycine through its pyridoxal phosphate cofactor; CO(2) is released and the remaining methylamine moiety is then transferred to the lipoamide cofactor of the H protein. In Bacteroides fragilis (strain ATCC 25285 / DSM 2151 / CCUG 4856 / JCM 11019 / LMG 10263 / NCTC 9343 / Onslow / VPI 2553 / EN-2), this protein is Glycine dehydrogenase (decarboxylating).